The chain runs to 1342 residues: DNA-directed RNA polymerase subunit beta (1342 aa).

The protein belongs to the RNA polymerase beta chain family. As to quaternary structure, the RNAP catalytic core consists of 2 alpha, 1 beta, 1 beta' and 1 omega subunit. When a sigma factor is associated with the core the holoenzyme is formed, which can initiate transcription.

The enzyme catalyses RNA(n) + a ribonucleoside 5'-triphosphate = RNA(n+1) + diphosphate. Its function is as follows. DNA-dependent RNA polymerase catalyzes the transcription of DNA into RNA using the four ribonucleoside triphosphates as substrates. The polypeptide is DNA-directed RNA polymerase subunit beta (Pectobacterium atrosepticum (strain SCRI 1043 / ATCC BAA-672) (Erwinia carotovora subsp. atroseptica)).